Consider the following 885-residue polypeptide: Disease resistance protein RFL1 (885 aa).

A coiled-coil region spans residues 27 to 61; that stretch reads SYIQNLSENLASLQKAMGVLNAKRDDVQGRINREE. An NB-ARC domain is found at 141-443; the sequence is EAAPIAEVEE…CEGFIKEKQG (303 aa). 183-190 is an ATP binding site; it reads GMGGVGKT. LRR repeat units follow at residues 517-538, 539-561, 564-586, 588-610, 611-633, 634-655, and 657-679; these read AVKRMSLMNNNFEKILGSPECV, ELITLFLQNNYKLVDISMEFFRC, SLAVLDLSENHSLSELPEEISEL, SLQYLDLSGTYIERLPHGLHELR, KLVHLKLERTRRLESISGISYLS, SLRTLRLRDSKTTLDTGLMKEL, and LLEHLELITTDISSGLVGELFCY.

It belongs to the disease resistance NB-LRR family.

Disease resistance (R) protein. The sequence is that of Disease resistance protein RFL1 (RFL1) from Arabidopsis thaliana (Mouse-ear cress).